Consider the following 299-residue polypeptide: Oxygen-dependent coproporphyrinogen-III oxidase (299 aa).

Ser92 provides a ligand contact to substrate. The a divalent metal cation site is built by His96 and His106. The Proton donor role is filled by His106. 108–110 (NVR) contacts substrate. Residues His145 and His175 each coordinate a divalent metal cation. The segment at 240-275 (YVEFNLVWDRGTLFGLQTGGRTESILMSMPPLVRWE) is important for dimerization. Substrate is bound at residue 258–260 (GGR).

It belongs to the aerobic coproporphyrinogen-III oxidase family. Homodimer. It depends on a divalent metal cation as a cofactor.

The protein localises to the cytoplasm. The enzyme catalyses coproporphyrinogen III + O2 + 2 H(+) = protoporphyrinogen IX + 2 CO2 + 2 H2O. The protein operates within porphyrin-containing compound metabolism; protoporphyrin-IX biosynthesis; protoporphyrinogen-IX from coproporphyrinogen-III (O2 route): step 1/1. Its function is as follows. Involved in the heme biosynthesis. Catalyzes the aerobic oxidative decarboxylation of propionate groups of rings A and B of coproporphyrinogen-III to yield the vinyl groups in protoporphyrinogen-IX. This is Oxygen-dependent coproporphyrinogen-III oxidase from Shigella boydii serotype 18 (strain CDC 3083-94 / BS512).